A 316-amino-acid polypeptide reads, in one-letter code: Transaldolase (316 aa).

The Schiff-base intermediate with substrate role is filled by K132.

It belongs to the transaldolase family. Type 1 subfamily. As to quaternary structure, homodimer.

The protein localises to the cytoplasm. The catalysed reaction is D-sedoheptulose 7-phosphate + D-glyceraldehyde 3-phosphate = D-erythrose 4-phosphate + beta-D-fructose 6-phosphate. The protein operates within carbohydrate degradation; pentose phosphate pathway; D-glyceraldehyde 3-phosphate and beta-D-fructose 6-phosphate from D-ribose 5-phosphate and D-xylulose 5-phosphate (non-oxidative stage): step 2/3. In terms of biological role, transaldolase is important for the balance of metabolites in the pentose-phosphate pathway. This chain is Transaldolase, found in Vibrio parahaemolyticus serotype O3:K6 (strain RIMD 2210633).